The sequence spans 134 residues: Profilin (134 aa).

The protein belongs to the profilin family. As to quaternary structure, occurs in many kinds of cells as a complex with monomeric actin in a 1:1 ratio.

The protein localises to the cytoplasm. It localises to the cytoskeleton. Binds to actin and affects the structure of the cytoskeleton. At high concentrations, profilin prevents the polymerization of actin, whereas it enhances it at low concentrations. By binding to PIP2, it inhibits the formation of IP3 and DG. The sequence is that of Profilin from Brassica napus (Rape).